Reading from the N-terminus, the 608-residue chain is MQFQTEVNQLLQLMIHSLYSNKEIFLRELISNASDALDKLNFLSVSDDKYKSLKFEPKIEIKIDKDKKTLSISDNGIGMDKDDLINNLGTIAKSGTKSFLENLSGDAKKDSQLIGQFGVGFYSAFMVASKIEVLSKKALDDKAYLWSSDANGYEIDDANKEEQGTSITLYLKDDEFANAYKIESIIEKYSNHIQFPIFMEKEEFTPAKEGEEEGKTELKISQINKANALWRMQKSSLKAEDYERFYEQNFHDSNKPLLYLHTKSEGKLEYNSLFFIPQNAPFDLFRVDYQSGLKLYVKRVFISDDDKELLPTYLRFVRGIIDVEDLPLNVSREILQENQILKGVKEASVKKILGELEKLKNNDKEKYLSFFKTFGKVLKEGLYGFGGEKDSLLKLMLYKSTKGENLRSLEEYKNDLQGEQKEIFYIAGNNESLLRTSPLLEEYKQKNIEVLLMDDEIDSLVTPMLEFEGLKFVAINQVEDKNELSDEEKNTFAPLVAKFKELLKDQVEDVRLTSRLKDSPSCIVYDKNKPDFAMQQLLKQMGQEQNFKPILEINPKHAIFTGLKNNESFSADIATLVLNMAKLSEGMGVDNPAEFNASLTKIINKAFS.

The tract at residues 1–332 is a; substrate-binding; the sequence is MQFQTEVNQL…VEDLPLNVSR (332 aa). The tract at residues 333–536 is b; it reads EILQENQILK…KNKPDFAMQQ (204 aa). The c stretch occupies residues 537 to 608; the sequence is LLKQMGQEQN…LTKIINKAFS (72 aa).

It belongs to the heat shock protein 90 family. As to quaternary structure, homodimer.

It is found in the cytoplasm. Functionally, molecular chaperone. Has ATPase activity. In Campylobacter jejuni subsp. jejuni serotype O:23/36 (strain 81-176), this protein is Chaperone protein HtpG.